The following is a 465-amino-acid chain: MTHYAISDLLKNKAEIGSEVTVKGWVRSRRDSKAGVSFIHVHDGSCFDAIQAVVAKELPNYDADVLRLTTGCSLIVTGTLVESPGQGQSCEIQATSVELVGLVDDPETYPVAKKRHTFEFLRGVAHLRPRTNAFGAVTRVRTTLSHAVHHFFYEQGFQWINTPILTASDCEGAGELFRVSTLDMANLPKTDSGKIDYSKDFFGKETFLTVSGQLNVEAYCLAMSKVYTFGPTFRAENSNTSRHLAEFWMIEPEIAFADLNDDADLAERFLKHMFKVVLDERSDDMAFFAERINPDVVSRLENMVDKEFVRIDYSEAIKILQNCGKKFEYPVQWGLDLQSEHERYLAETHVGAPVIVMNYPKEIKAFYMRLNDDDKTVAAMDVLAPGIGEIIGGSQREDRLDVLDARIGDMHHKEELWWYRDLRRYGSVPHAGFGLGFERLIAYVTGMENVRDVIPFPRTPDNAQF.

Belongs to the class-II aminoacyl-tRNA synthetase family. As to quaternary structure, homodimer.

The protein localises to the cytoplasm. The catalysed reaction is tRNA(Asn) + L-asparagine + ATP = L-asparaginyl-tRNA(Asn) + AMP + diphosphate + H(+). The chain is Asparagine--tRNA ligase from Hahella chejuensis (strain KCTC 2396).